The following is a 712-amino-acid chain: Cyclomaltodextrin glucanotransferase (712 aa).

The first 27 residues, 1 to 27 (MKRFMKLTAVWTLWLSLTLGLLSPVHA), serve as a signal peptide directing secretion. Residues 28–165 (APDTSVSNKQ…NIKVIIDFAP (138 aa)) are A1. Ca(2+) is bound by residues aspartate 54, asparagine 56, asparagine 59, and asparagine 60. An intrachain disulfide couples cysteine 70 to cysteine 77. The Ca(2+) site is built by glycine 78 and aspartate 80. A substrate-binding site is contributed by 127-128 (YW). Asparagine 166 is a Ca(2+) binding site. The tract at residues 166–229 (NHTSPASSDD…NLYDLADLNH (64 aa)) is b. Histidine 167 contacts substrate. Isoleucine 217 serves as a coordination point for Ca(2+). 220 to 223 (NLYD) provides a ligand contact to substrate. A Ca(2+)-binding site is contributed by aspartate 226. Positions 230 to 433 (NNSSVDVYLK…LRKSNPAIAY (204 aa)) are A2. Arginine 254 is a binding site for substrate. Aspartate 256 functions as the Nucleophile in the catalytic mechanism. 259–260 (KH) is a substrate binding site. Residue histidine 260 participates in Ca(2+) binding. Glutamate 284 functions as the Proton donor in the catalytic mechanism. Substrate contacts are provided by histidine 354, aspartate 398, and arginine 402. The segment at 434–522 (GSTQERWINN…GTAVWQYTTD (89 aa)) is c. Residues 523 to 608 (ATAPINGNVG…SNIYDNFEVL (86 aa)) are d. The IPT/TIG domain maps to 526-606 (PINGNVGPMM…AASNIYDNFE (81 aa)). The region spanning 607–712 (VLTGDQVTVR…TATVNVNWQP (106 aa)) is the CBM20 domain. The tract at residues 609 to 712 (TGDQVTVRFV…TATVNVNWQP (104 aa)) is e.

This sequence belongs to the glycosyl hydrolase 13 family. In terms of assembly, monomer. The cofactor is Ca(2+).

It localises to the secreted. It carries out the reaction Cyclizes part of a (1-&gt;4)-alpha-D-glucan chain by formation of a (1-&gt;4)-alpha-D-glucosidic bond.. The chain is Cyclomaltodextrin glucanotransferase (cgt) from Bacillus sp. (strain 38-2).